The following is a 179-amino-acid chain: UPF0227 protein VP0969 (179 aa).

This sequence belongs to the UPF0227 family.

The protein is UPF0227 protein VP0969 of Vibrio parahaemolyticus serotype O3:K6 (strain RIMD 2210633).